The following is a 391-amino-acid chain: D-gluconate/D-galactonate dehydratase (391 aa).

Glu-198 serves as a coordination point for Mg(2+). His-200 (proton donor) is an active-site residue. Residues Glu-224 and Glu-250 each coordinate Mg(2+). The Proton acceptor role is filled by His-300.

It belongs to the mandelate racemase/muconate lactonizing enzyme family. GaD subfamily. As to quaternary structure, homooctamer. Requires Mg(2+) as cofactor.

It catalyses the reaction D-gluconate = 2-dehydro-3-deoxy-D-gluconate + H2O. It carries out the reaction D-galactonate = 2-dehydro-3-deoxy-D-galactonate + H2O. The protein operates within carbohydrate acid metabolism; D-gluconate degradation. Functionally, involved in the degradation of glucose and galactose via the nonphosphorylative variant of Entner-Doudoroff pathway. Catalyzes the dehydration of gluconate to produce 2-keto-3-deoxygluconate (KDG). It is also able to catalyze the dehydration of galactonate to produce 2-keto-3-deoxygalactonate (KDGal). This is D-gluconate/D-galactonate dehydratase from Picrophilus torridus (strain ATCC 700027 / DSM 9790 / JCM 10055 / NBRC 100828 / KAW 2/3).